The primary structure comprises 188 residues: GMP synthase [glutamine-hydrolyzing] subunit A (188 aa).

The Glutamine amidotransferase type-1 domain maps to 3-188; the sequence is KVLVVAFGGQ…FQNFVELCKR (186 aa). Cys-79 (nucleophile) is an active-site residue. Catalysis depends on residues His-166 and Glu-168.

As to quaternary structure, heterodimer composed of a glutamine amidotransferase subunit (A) and a GMP-binding subunit (B).

It carries out the reaction XMP + L-glutamine + ATP + H2O = GMP + L-glutamate + AMP + diphosphate + 2 H(+). It participates in purine metabolism; GMP biosynthesis; GMP from XMP (L-Gln route): step 1/1. Catalyzes the synthesis of GMP from XMP. In Ignicoccus hospitalis (strain KIN4/I / DSM 18386 / JCM 14125), this protein is GMP synthase [glutamine-hydrolyzing] subunit A.